A 232-amino-acid chain; its full sequence is Phosphatidylserine decarboxylase proenzyme (232 aa).

Serine 201 acts as the Schiff-base intermediate with substrate; via pyruvic acid in catalysis. The residue at position 201 (serine 201) is a Pyruvic acid (Ser); by autocatalysis.

Belongs to the phosphatidylserine decarboxylase family. PSD-A subfamily. Heterodimer of a large membrane-associated beta subunit and a small pyruvoyl-containing alpha subunit. Pyruvate serves as cofactor. Post-translationally, is synthesized initially as an inactive proenzyme. Formation of the active enzyme involves a self-maturation process in which the active site pyruvoyl group is generated from an internal serine residue via an autocatalytic post-translational modification. Two non-identical subunits are generated from the proenzyme in this reaction, and the pyruvate is formed at the N-terminus of the alpha chain, which is derived from the carboxyl end of the proenzyme. The post-translation cleavage follows an unusual pathway, termed non-hydrolytic serinolysis, in which the side chain hydroxyl group of the serine supplies its oxygen atom to form the C-terminus of the beta chain, while the remainder of the serine residue undergoes an oxidative deamination to produce ammonia and the pyruvoyl prosthetic group on the alpha chain.

Its subcellular location is the cell membrane. It catalyses the reaction a 1,2-diacyl-sn-glycero-3-phospho-L-serine + H(+) = a 1,2-diacyl-sn-glycero-3-phosphoethanolamine + CO2. It participates in phospholipid metabolism; phosphatidylethanolamine biosynthesis; phosphatidylethanolamine from CDP-diacylglycerol: step 2/2. Catalyzes the formation of phosphatidylethanolamine (PtdEtn) from phosphatidylserine (PtdSer). The chain is Phosphatidylserine decarboxylase proenzyme from Mycolicibacterium smegmatis (strain ATCC 700084 / mc(2)155) (Mycobacterium smegmatis).